The sequence spans 500 residues: NAD(P)H-quinone oxidoreductase chain 4, chloroplastic (500 aa).

14 helical membrane-spanning segments follow: residues 4–24 (FPWL…IFFL), 35–55 (YTIC…CYHF), 87–107 (IGPI…AWPI), 113–130 (LFHF…GSFS), 134–154 (LLLF…LLCM), 167–187 (FILY…GVAL), 208–228 (VLEI…SPII), 242–262 (HYST…YGLI), 272–292 (AHSI…IYAA), 305–325 (IAYS…SLTD), 330–350 (GALL…FLAG), 386–406 (LALP…GIIT), 411–431 (LLIP…LTPI), and 462–482 (LFLS…PDFV).

The protein belongs to the complex I subunit 4 family.

It localises to the plastid. It is found in the chloroplast thylakoid membrane. It catalyses the reaction a plastoquinone + NADH + (n+1) H(+)(in) = a plastoquinol + NAD(+) + n H(+)(out). The enzyme catalyses a plastoquinone + NADPH + (n+1) H(+)(in) = a plastoquinol + NADP(+) + n H(+)(out). In Nicotiana tomentosiformis (Tobacco), this protein is NAD(P)H-quinone oxidoreductase chain 4, chloroplastic.